The chain runs to 27 residues: Ranatuerin-2Cb (27 aa).

A disulfide bridge links C20 with C25.

In terms of tissue distribution, expressed by the skin glands.

Its subcellular location is the secreted. In terms of biological role, antibacterial activity against Gram-positive bacterium S.aureus (MIC=40 uM) and Gram-negative bacterium E.coli (MIC=2 uM). Has activity against C.albicans (MIC=46 uM). This chain is Ranatuerin-2Cb, found in Lithobates clamitans (Green frog).